Reading from the N-terminus, the 433-residue chain is Histidinol dehydrogenase (433 aa).

NAD(+)-binding residues include Tyr-133, Gln-194, and Asn-217. Ser-240, Gln-262, and His-265 together coordinate substrate. Residues Gln-262 and His-265 each coordinate Zn(2+). Active-site proton acceptor residues include Glu-330 and His-331. Residues His-331, Asp-364, Glu-418, and His-423 each coordinate substrate. Asp-364 contributes to the Zn(2+) binding site. His-423 is a binding site for Zn(2+).

Belongs to the histidinol dehydrogenase family. It depends on Zn(2+) as a cofactor.

The enzyme catalyses L-histidinol + 2 NAD(+) + H2O = L-histidine + 2 NADH + 3 H(+). It participates in amino-acid biosynthesis; L-histidine biosynthesis; L-histidine from 5-phospho-alpha-D-ribose 1-diphosphate: step 9/9. Its function is as follows. Catalyzes the sequential NAD-dependent oxidations of L-histidinol to L-histidinaldehyde and then to L-histidine. The polypeptide is Histidinol dehydrogenase (Dechloromonas aromatica (strain RCB)).